Reading from the N-terminus, the 199-residue chain is Holliday junction branch migration complex subunit RuvA (199 aa).

The domain I stretch occupies residues 1–63 (MIASVRGEVL…EDSMTLYGFT (63 aa)). Positions 64–142 (DAETRDLFLT…AAGAAGAPAG (79 aa)) are domain II. The segment at 143–153 (AARNGHAVRGP) is flexible linker. Residues 153 to 199 (PVVEALVGLGFAAKQAEEATDKVLAAEPEAGTSGALRAALSLLGKSR) are domain III.

The protein belongs to the RuvA family. Homotetramer. Forms an RuvA(8)-RuvB(12)-Holliday junction (HJ) complex. HJ DNA is sandwiched between 2 RuvA tetramers; dsDNA enters through RuvA and exits via RuvB. An RuvB hexamer assembles on each DNA strand where it exits the tetramer. Each RuvB hexamer is contacted by two RuvA subunits (via domain III) on 2 adjacent RuvB subunits; this complex drives branch migration. In the full resolvosome a probable DNA-RuvA(4)-RuvB(12)-RuvC(2) complex forms which resolves the HJ.

The protein localises to the cytoplasm. Its function is as follows. The RuvA-RuvB-RuvC complex processes Holliday junction (HJ) DNA during genetic recombination and DNA repair, while the RuvA-RuvB complex plays an important role in the rescue of blocked DNA replication forks via replication fork reversal (RFR). RuvA specifically binds to HJ cruciform DNA, conferring on it an open structure. The RuvB hexamer acts as an ATP-dependent pump, pulling dsDNA into and through the RuvAB complex. HJ branch migration allows RuvC to scan DNA until it finds its consensus sequence, where it cleaves and resolves the cruciform DNA. In Mycobacterium avium (strain 104), this protein is Holliday junction branch migration complex subunit RuvA.